The chain runs to 352 residues: UDP-N-acetylglucosamine--N-acetylmuramyl-(pentapeptide) pyrophosphoryl-undecaprenol N-acetylglucosamine transferase (352 aa).

Residues 14–16 (TGG), N124, R164, S185, and Q285 contribute to the UDP-N-acetyl-alpha-D-glucosamine site.

It belongs to the glycosyltransferase 28 family. MurG subfamily.

Its subcellular location is the cell inner membrane. It carries out the reaction di-trans,octa-cis-undecaprenyl diphospho-N-acetyl-alpha-D-muramoyl-L-alanyl-D-glutamyl-meso-2,6-diaminopimeloyl-D-alanyl-D-alanine + UDP-N-acetyl-alpha-D-glucosamine = di-trans,octa-cis-undecaprenyl diphospho-[N-acetyl-alpha-D-glucosaminyl-(1-&gt;4)]-N-acetyl-alpha-D-muramoyl-L-alanyl-D-glutamyl-meso-2,6-diaminopimeloyl-D-alanyl-D-alanine + UDP + H(+). Its pathway is cell wall biogenesis; peptidoglycan biosynthesis. Its function is as follows. Cell wall formation. Catalyzes the transfer of a GlcNAc subunit on undecaprenyl-pyrophosphoryl-MurNAc-pentapeptide (lipid intermediate I) to form undecaprenyl-pyrophosphoryl-MurNAc-(pentapeptide)GlcNAc (lipid intermediate II). The protein is UDP-N-acetylglucosamine--N-acetylmuramyl-(pentapeptide) pyrophosphoryl-undecaprenol N-acetylglucosamine transferase of Chlamydia trachomatis serovar L2 (strain ATCC VR-902B / DSM 19102 / 434/Bu).